The primary structure comprises 421 residues: Threonine--tRNA ligase editing subunit (421 aa).

Belongs to the class-II aminoacyl-tRNA synthetase family. Archaea-specific ThrRS editing domain subfamily. As to quaternary structure, probably interacts with its catalytic subunit.

It is found in the cytoplasm. Its function is as follows. Freestanding tRNA editing subunit of threonine--tRNA ligase, the catalytic subunit is probably AC Q9YDW0. Deacylates (edits) mischarged L-seryl-tRNA(Thr) in trans; has no activity on correctly charged L-threonyl-tRNA(Thr). Probably does not aminoacylate tRNA(Thr). Deacylates correctly charged glycyl-tRNA(Gly), but not glycyl-tRNA(Gly)(2'-dA76) (the terminal 2'-OH of tRNA adenine 76 has been dehydroxylated) nor the 2'-fluoro tRNA derivative, strongly suggesting the editing function is catalyzed by the 2'-OH of A76 of tRNA(Thr). The sequence is that of Threonine--tRNA ligase editing subunit (thrS2) from Aeropyrum pernix (strain ATCC 700893 / DSM 11879 / JCM 9820 / NBRC 100138 / K1).